The following is a 185-amino-acid chain: Large ribosomal subunit protein uL5 (185 aa).

This sequence belongs to the universal ribosomal protein uL5 family. As to quaternary structure, part of the 50S ribosomal subunit; part of the 5S rRNA/L5/L18/L25 subcomplex. Contacts the 5S rRNA and the P site tRNA. Forms a bridge to the 30S subunit in the 70S ribosome.

Its function is as follows. This is one of the proteins that bind and probably mediate the attachment of the 5S RNA into the large ribosomal subunit, where it forms part of the central protuberance. In the 70S ribosome it contacts protein S13 of the 30S subunit (bridge B1b), connecting the 2 subunits; this bridge is implicated in subunit movement. Contacts the P site tRNA; the 5S rRNA and some of its associated proteins might help stabilize positioning of ribosome-bound tRNAs. This chain is Large ribosomal subunit protein uL5, found in Rhodopseudomonas palustris (strain BisB5).